The sequence spans 164 residues: Large ribosomal subunit protein uL10 (164 aa).

It belongs to the universal ribosomal protein uL10 family. As to quaternary structure, part of the ribosomal stalk of the 50S ribosomal subunit. The N-terminus interacts with L11 and the large rRNA to form the base of the stalk. The C-terminus forms an elongated spine to which L12 dimers bind in a sequential fashion forming a multimeric L10(L12)X complex.

Its function is as follows. Forms part of the ribosomal stalk, playing a central role in the interaction of the ribosome with GTP-bound translation factors. This chain is Large ribosomal subunit protein uL10, found in Helicobacter pylori (strain P12).